The following is a 101-amino-acid chain: Large ribosomal subunit protein uL23c (101 aa).

Belongs to the universal ribosomal protein uL23 family. Part of the 50S ribosomal subunit.

Its subcellular location is the plastid. It is found in the chloroplast. Binds to 23S rRNA. This chain is Large ribosomal subunit protein uL23c (rpl23), found in Cyanidium caldarium (Red alga).